A 118-amino-acid chain; its full sequence is Holo-[acyl-carrier-protein] synthase (118 aa).

The Mg(2+) site is built by Asp-5 and Glu-51.

It belongs to the P-Pant transferase superfamily. AcpS family. Requires Mg(2+) as cofactor.

The protein localises to the cytoplasm. It catalyses the reaction apo-[ACP] + CoA = holo-[ACP] + adenosine 3',5'-bisphosphate + H(+). Functionally, transfers the 4'-phosphopantetheine moiety from coenzyme A to a Ser of acyl-carrier-protein. The protein is Holo-[acyl-carrier-protein] synthase of Helicobacter pylori (strain P12).